A 516-amino-acid chain; its full sequence is GMP synthase [glutamine-hydrolyzing] (516 aa).

The Glutamine amidotransferase type-1 domain maps to 8 to 198; that stretch reads KILILDFGSQ…VVNICGCDTL (191 aa). The Nucleophile role is filled by Cys-84. Residues His-172 and Glu-174 contribute to the active site. Residues 199 to 391 form the GMPS ATP-PPase domain; it reads WNIENIIEND…LGLPYNMLYR (193 aa). ATP is bound at residue 226 to 232; the sequence is SGGVDSS.

Homodimer.

The catalysed reaction is XMP + L-glutamine + ATP + H2O = GMP + L-glutamate + AMP + diphosphate + 2 H(+). Its pathway is purine metabolism; GMP biosynthesis; GMP from XMP (L-Gln route): step 1/1. In terms of biological role, catalyzes the synthesis of GMP from XMP. The protein is GMP synthase [glutamine-hydrolyzing] of Francisella tularensis subsp. holarctica (strain FTNF002-00 / FTA).